An 838-amino-acid polypeptide reads, in one-letter code: Lymphoid-specific helicase (838 aa).

Residues methionine 30–serine 115 adopt a coiled-coil conformation. The span at glutamine 94 to lysine 108 shows a compositional bias: basic and acidic residues. The tract at residues glutamine 94–serine 135 is disordered. Serine 115 is modified (phosphoserine). The segment covering serine 119 to glutamate 134 has biased composition (basic and acidic residues). A Helicase ATP-binding domain is found at arginine 235–aspartate 403. Aspartate 248–threonine 255 contributes to the ATP binding site. The short motif at aspartate 354 to histidine 357 is the DEAH box element. Serine 503 and serine 515 each carry phosphoserine. The region spanning isoleucine 603–aspartate 767 is the Helicase C-terminal domain.

The protein belongs to the SNF2/RAD54 helicase family. In terms of tissue distribution, highly expressed in proliferative tissues such as adult thymus and testis, and expressed at lower levels in uterus, small intestine, colon, and peripheral blood mononuclear cells. Also expressed in neoplastic cell lines including those derived from myeloid and lymphoid leukemias.

Its subcellular location is the nucleus. Functionally, plays an essential role in normal development and survival. Involved in regulation of the expansion or survival of lymphoid cells. Required for de novo or maintenance DNA methylation. May control silencing of the imprinted CDKN1C gene through DNA methylation. May play a role in formation and organization of heterochromatin, implying a functional role in the regulation of transcription and mitosis. This Homo sapiens (Human) protein is Lymphoid-specific helicase.